The primary structure comprises 623 residues: Bifunctional dihydrofolate reductase-thymidylate synthase (623 aa).

A DHFR domain is found at 9-237 (DIYAICACCK…TTLDFLVYSK (229 aa)). 13-14 (IC) contacts substrate. NADP(+) is bound by residues Ala-15 and 38–44 (GLGNKGT). Asp-53 serves as a coordination point for substrate. 3 tandem repeats follow at residues 88–91 (GGDN), 94–97 (GGDN), and 100–103 (GGDN). The 3 X 4 AA repeats of G-G-D-N stretch occupies residues 88–103 (GGDNTSGGDNTHGGDN). Residues 115–117 (RSS), 137–139 (SKT), and Asp-153 each bind NADP(+). 3 residues coordinate substrate: Ile-173, Tyr-179, and Thr-194. Residue 174–181 (GGAQVYRE) participates in NADP(+) binding. The disordered stretch occupies residues 263–309 (TAMRRNVAPRTAAPPMGPHSRANGERAPPRARARRTTPRQRKTTSCT). Residues 291–304 (PRARARRTTPRQRK) are compositionally biased toward basic residues. The thymidylate synthase stretch occupies residues 337 to 623 (QHPEYQYLGI…HDKITMEMAA (287 aa)). Residue Arg-360 coordinates dUMP. Residue Cys-505 is part of the active site. DUMP-binding positions include His-506, 524–528 (QRSCD), Asn-536, and 566–568 (HVY).

This sequence in the N-terminal section; belongs to the dihydrofolate reductase family. The protein in the C-terminal section; belongs to the thymidylate synthase family. As to quaternary structure, homodimer.

The catalysed reaction is (6S)-5,6,7,8-tetrahydrofolate + NADP(+) = 7,8-dihydrofolate + NADPH + H(+). It catalyses the reaction dUMP + (6R)-5,10-methylene-5,6,7,8-tetrahydrofolate = 7,8-dihydrofolate + dTMP. The protein operates within cofactor biosynthesis; tetrahydrofolate biosynthesis; 5,6,7,8-tetrahydrofolate from 7,8-dihydrofolate: step 1/1. Functionally, bifunctional enzyme. Involved in de novo dTMP biosynthesis. Key enzyme in folate metabolism. Catalyzes an essential reaction for de novo glycine and purine synthesis, DNA precursor synthesis, and for the conversion of dUMP to dTMP. This chain is Bifunctional dihydrofolate reductase-thymidylate synthase, found in Plasmodium vivax.